Reading from the N-terminus, the 1358-residue chain is Nonribosomal peptide synthetase rstn8 (1358 aa).

The segment at 1 to 23 is disordered; it reads MSHSSHYSPVDSGMVPSSSSTED. An adenylation region spans residues 261 to 659; it reads YRELDRLSSR…LGEVEYRLHQ (399 aa). One can recognise a Carrier domain in the interval 795 to 872; the sequence is ETVSPAESTL…DQASLVRPLV (78 aa). Serine 832 is modified (O-(pantetheine 4'-phosphoryl)serine). Residues 909-1322 are condensation; that stretch reads EDIYPCTPLQ…DDYSQALHEL (414 aa).

It belongs to the NRP synthetase family. It depends on pantetheine 4'-phosphate as a cofactor.

The catalysed reaction is restrictinol + glycine + H(+) = restricticin + H2O. The protein operates within antifungal biosynthesis. Its function is as follows. Nonribosomal peptide synthetase; part of the gene cluster that mediates the biosynthesis of the tetrahydropyranyl antifungal agent restricticin that acts as an inhibitor of CYP51 and blocks the ergosterol biosynthesis. Within the pathway, rstn8 catalyzes the C3 esterification of restrictinol with glycine to yield restricticin. Rstn8 represents an example of the emerging class of single-module NRPS-like enzymes that perform esterification reactions. Rstn8 displays strict substrate specificity toward glycine as no other natural amino acid is accepted. Rstn8 does not recognize desmethylrestrictinol as a substrate, demonstrating that rstn1-catalyzed methylation, possibly protecting the C4-OH, must precede the final esterification step. The highly reducing polyketide synthase rstn3, the short chain dehydrogenase rstn4, the cyclase rstn5, the FAD-dependent monooxygenase rstn6 and the enoylreductase rstn7 are required to generate the first stable intermediate desmethylrestrictinol. Rstn3 with rstn7 biosynthesize the first polyketide chain intermediate that is reduced by rstn4, followed by epoxidation by rstn6 before 6-endo cyclization via epoxide opening by rstn5 leads to desmethylrestrictinol. The methyltransferase rstn1 then catalyzes the C4 O-methylation of desmethylrestrictinol to produce restrictinol, and the nonribosomal peptide synthetase rstn8 catalyzes the C3 esterification of restrictinol with glycine that leads to restricticin. The chain is Nonribosomal peptide synthetase rstn8 from Aspergillus nomiae NRRL (strain ATCC 15546 / NRRL 13137 / CBS 260.88 / M93).